A 333-amino-acid chain; its full sequence is Adenosine deaminase (333 aa).

2 residues coordinate Zn(2+): H12 and H14. 3 residues coordinate substrate: H14, D16, and G170. Zn(2+) is bound at residue H197. E200 serves as the catalytic Proton donor. D278 provides a ligand contact to Zn(2+). D279 contacts substrate.

The protein belongs to the metallo-dependent hydrolases superfamily. Adenosine and AMP deaminases family. Adenosine deaminase subfamily. The cofactor is Zn(2+).

It carries out the reaction adenosine + H2O + H(+) = inosine + NH4(+). The enzyme catalyses 2'-deoxyadenosine + H2O + H(+) = 2'-deoxyinosine + NH4(+). Functionally, catalyzes the hydrolytic deamination of adenosine and 2-deoxyadenosine. In Klebsiella pneumoniae (strain 342), this protein is Adenosine deaminase.